A 489-amino-acid chain; its full sequence is GTPase Der (489 aa).

2 EngA-type G domains span residues 3-166 and 201-374; these read PVVA…FDDV and IKLA…DSST. GTP-binding positions include 9 to 16, 56 to 60, 118 to 121, 207 to 214, 254 to 258, and 319 to 322; these read GRPNVGKS, DTGGI, NKTD, DTAGV, and NKWD. The region spanning 375–459 is the KH-like domain; the sequence is KRISTSILTR…PIRIEFREGT (85 aa).

Belongs to the TRAFAC class TrmE-Era-EngA-EngB-Septin-like GTPase superfamily. EngA (Der) GTPase family. As to quaternary structure, associates with the 50S ribosomal subunit.

Functionally, GTPase that plays an essential role in the late steps of ribosome biogenesis. The sequence is that of GTPase Der from Psychromonas ingrahamii (strain DSM 17664 / CCUG 51855 / 37).